The primary structure comprises 731 residues: T-cell activation Rho GTPase-activating protein (731 aa).

A Rho-GAP domain is found at 88–277; that stretch reads QPLSIICGDS…FLIDNCFEIF (190 aa). Disordered regions lie at residues 288–421, 464–507, and 641–662; these read TSDD…AEDP, SLDA…IKKH, and HHVE…GLSP. Residues 299-311 show a composition bias toward polar residues; it reads SDVSTLQNDSAYD. Positions 319 to 329 are enriched in low complexity; that stretch reads SNSSSGISSPS. Polar residues predominate over residues 380-399; the sequence is SMPSSQECLESRVTNQTLTK. S400 is modified (phosphoserine). A compositionally biased stretch (low complexity) spans 464 to 480; it reads SLDASSDSSPVASPSSP. 2 stretches are compositionally biased toward basic and acidic residues: residues 494-503 and 641-652; these read KTEKGKPSRE and HHVEDSRHRGSK.

Its function is as follows. May function as a GTPase-activating protein and may play important roles during T-cell activation. The protein is T-cell activation Rho GTPase-activating protein (TAGAP) of Homo sapiens (Human).